The chain runs to 314 residues: D-alanine--D-alanine ligase (314 aa).

The ATP-grasp domain maps to 115-310; it reads KQVWQSVGLV…FNELVLEILA (196 aa). 141–196 contacts ATP; it reads LDSLGGQGFVKPAHEGSSIGMSVVSTAQELKAAYEKAAHYDAKVLVERRIVGREFT. Mg(2+) contacts are provided by D264, E277, and N279.

It belongs to the D-alanine--D-alanine ligase family. It depends on Mg(2+) as a cofactor. Requires Mn(2+) as cofactor.

The protein localises to the cytoplasm. The enzyme catalyses 2 D-alanine + ATP = D-alanyl-D-alanine + ADP + phosphate + H(+). Its pathway is cell wall biogenesis; peptidoglycan biosynthesis. In terms of biological role, cell wall formation. This is D-alanine--D-alanine ligase from Saccharophagus degradans (strain 2-40 / ATCC 43961 / DSM 17024).